A 175-amino-acid chain; its full sequence is tRNA (cytidine(56)-2'-O)-methyltransferase (175 aa).

L82 lines the S-adenosyl-L-methionine pocket.

This sequence belongs to the aTrm56 family. Homodimer.

The protein localises to the cytoplasm. It carries out the reaction cytidine(56) in tRNA + S-adenosyl-L-methionine = 2'-O-methylcytidine(56) in tRNA + S-adenosyl-L-homocysteine + H(+). In terms of biological role, specifically catalyzes the AdoMet-dependent 2'-O-ribose methylation of cytidine at position 56 in tRNAs. In Cenarchaeum symbiosum (strain A), this protein is tRNA (cytidine(56)-2'-O)-methyltransferase.